We begin with the raw amino-acid sequence, 150 residues long: Large ribosomal subunit protein bL9 (150 aa).

The protein belongs to the bacterial ribosomal protein bL9 family.

Functionally, binds to the 23S rRNA. The polypeptide is Large ribosomal subunit protein bL9 (Halorhodospira halophila (strain DSM 244 / SL1) (Ectothiorhodospira halophila (strain DSM 244 / SL1))).